The sequence spans 133 residues: Global transcriptional regulator Spx (133 aa).

A disulfide bridge links Cys-10 with Cys-13.

This sequence belongs to the ArsC family. Spx subfamily. In terms of assembly, interacts with the C-terminal domain of the alpha subunit of the RNAP.

It localises to the cytoplasm. Global transcriptional regulator that plays a key role in stress response and exerts either positive or negative regulation of genes. Acts by interacting with the C-terminal domain of the alpha subunit of the RNA polymerase (RNAP). This interaction can enhance binding of RNAP to the promoter region of target genes and stimulate their transcription, or block interaction of RNAP with activator. In Streptococcus pneumoniae serotype 4 (strain ATCC BAA-334 / TIGR4), this protein is Global transcriptional regulator Spx.